A 121-amino-acid polypeptide reads, in one-letter code: Small ribosomal subunit protein bS6 (121 aa).

Belongs to the bacterial ribosomal protein bS6 family.

Functionally, binds together with bS18 to 16S ribosomal RNA. This is Small ribosomal subunit protein bS6 from Rickettsia peacockii (strain Rustic).